A 155-amino-acid chain; its full sequence is Large ribosomal subunit protein eL24 (155 aa).

Basic and acidic residues predominate over residues 97-129; sequence KPEIRKAKRDEKAKADKEKKKADKAARKADKAK. The disordered stretch occupies residues 97-155; it reads KPEIRKAKRDEKAKADKEKKKADKAARKADKAKSAATQASKISKQQAKGAFQKVAATSR. Positions 133–142 are enriched in polar residues; the sequence is TQASKISKQQ.

It belongs to the eukaryotic ribosomal protein eL24 family.

The protein is Large ribosomal subunit protein eL24 (RPL24) of Eremothecium gossypii (strain ATCC 10895 / CBS 109.51 / FGSC 9923 / NRRL Y-1056) (Yeast).